A 162-amino-acid polypeptide reads, in one-letter code: Phosphopantetheine adenylyltransferase (162 aa).

Position 9 (Ser-9) interacts with substrate. ATP is bound by residues 9 to 10 (SF) and His-17. Substrate-binding residues include Lys-41, Leu-73, and Lys-87. ATP is bound by residues 88–90 (GLR), Glu-98, and 122–128 (YSFLSSS).

Belongs to the bacterial CoaD family. In terms of assembly, homohexamer. The cofactor is Mg(2+).

The protein resides in the cytoplasm. It carries out the reaction (R)-4'-phosphopantetheine + ATP + H(+) = 3'-dephospho-CoA + diphosphate. It functions in the pathway cofactor biosynthesis; coenzyme A biosynthesis; CoA from (R)-pantothenate: step 4/5. Functionally, reversibly transfers an adenylyl group from ATP to 4'-phosphopantetheine, yielding dephospho-CoA (dPCoA) and pyrophosphate. The sequence is that of Phosphopantetheine adenylyltransferase from Salinispora tropica (strain ATCC BAA-916 / DSM 44818 / JCM 13857 / NBRC 105044 / CNB-440).